The chain runs to 392 residues: Putative glutamate--cysteine ligase 2 (392 aa).

Residues 1–21 form a disordered region; the sequence is MMPVSGWRAVSSAPASSSAGR. Low complexity predominate over residues 9 to 19; that stretch reads AVSSAPASSSA.

Belongs to the glutamate--cysteine ligase type 2 family. YbdK subfamily.

The catalysed reaction is L-cysteine + L-glutamate + ATP = gamma-L-glutamyl-L-cysteine + ADP + phosphate + H(+). ATP-dependent carboxylate-amine ligase which exhibits weak glutamate--cysteine ligase activity. In Mycobacterium ulcerans (strain Agy99), this protein is Putative glutamate--cysteine ligase 2.